Here is an 808-residue protein sequence, read N- to C-terminus: Na(+)/H(+) antiporter 2 (808 aa).

A run of 9 helical transmembrane segments spans residues 12-32 (HVAY…SLFV), 36-56 (LYIG…PHCL), 70-90 (ITLE…SVEL), 105-125 (LLVP…WILV), 128-148 (LNFP…PVLA), 174-194 (CNDG…LYPG), 203-223 (WICV…CIIG), 244-264 (FLAF…MLGV), and 267-287 (LLVS…AAKT). A glycan (N-linked (GlcNAc...) asparagine) is linked at Asn-291. The next 5 membrane-spanning stretches (helical) occupy residues 294-314 (NVID…ILPW), 319-339 (NPDI…VIFL), 361-381 (AMFI…AITS), 409-429 (VMAC…IVHG), and 432-452 (VAVI…LPTG). 2 disordered regions span residues 478 to 499 (QRLD…SGMV) and 541 to 562 (HAST…NGRA). The segment covering 542-561 (ASTNDSHGTTTANLGTSNGR) has biased composition (polar residues). Asn-545 and Asn-602 each carry an N-linked (GlcNAc...) asparagine glycan. A disordered region spans residues 774–808 (LHSEDEMADDEAESENDMDYEDSDGPASRFKDHAD). Over residues 779 to 797 (EMADDEAESENDMDYEDSD) the composition is skewed to acidic residues.

The protein belongs to the fungal Na(+)/H(+) exchanger family.

The protein localises to the membrane. In terms of biological role, sodium export from cell, takes up external protons in exchange for internal sodium ions. Seems to be poorly expressed. This Zygosaccharomyces rouxii protein is Na(+)/H(+) antiporter 2 (SOD22).